The primary structure comprises 148 residues: Large ribosomal subunit protein bL9 (148 aa).

It belongs to the bacterial ribosomal protein bL9 family.

In terms of biological role, binds to the 23S rRNA. The protein is Large ribosomal subunit protein bL9 of Aeromonas salmonicida (strain A449).